Reading from the N-terminus, the 160-residue chain is Biogenesis of lysosome-related organelles complex 1 subunit 5 (160 aa).

The protein belongs to the BLOC1S5 family. Component of the biogenesis of lysosome-related organelles complex-1 (BLOC-1) composed of Blos1, Blos2, Blos3, Blos4, Dysb, Muted, Pldn and Snapin.

Its function is as follows. Component of the biogenesis of lysosome-related organelles complex-1 (BLOC-1) involved in pigment granule biogenesis. In Drosophila melanogaster (Fruit fly), this protein is Biogenesis of lysosome-related organelles complex 1 subunit 5.